The chain runs to 397 residues: Phosphonopyruvate decarboxylase (397 aa).

Belongs to the TPP enzyme family. Requires thiamine diphosphate as cofactor. Mg(2+) is required as a cofactor.

It carries out the reaction 3-phosphonopyruvate + H(+) = phosphonoacetaldehyde + CO2. Its pathway is secondary metabolite biosynthesis; bialaphos biosynthesis. Functionally, involved in the biosynthesis of phosphinothricin tripeptide (PTT), also known as bialaphos (BA), a natural-product antibiotic and potent herbicide. Catalyzes the decarboxylation of phosphonopyruvate (PnPy) to generate phosphonoacetaldehyde (PnAA). This is Phosphonopyruvate decarboxylase from Streptomyces viridochromogenes (strain DSM 40736 / JCM 4977 / BCRC 1201 / Tue 494).